The following is a 144-amino-acid chain: Large ribosomal subunit protein uL11 (144 aa).

This sequence belongs to the universal ribosomal protein uL11 family. Part of the ribosomal stalk of the 50S ribosomal subunit. Interacts with L10 and the large rRNA to form the base of the stalk. L10 forms an elongated spine to which L12 dimers bind in a sequential fashion forming a multimeric L10(L12)X complex. In terms of processing, one or more lysine residues are methylated.

Functionally, forms part of the ribosomal stalk which helps the ribosome interact with GTP-bound translation factors. The chain is Large ribosomal subunit protein uL11 from Neisseria gonorrhoeae (strain ATCC 700825 / FA 1090).